Here is a 131-residue protein sequence, read N- to C-terminus: Major pollen allergen Pla l 1 (131 aa).

3 disulfides stabilise this stretch: Cys-17-Cys-86, Cys-20-Cys-131, and Cys-42-Cys-74. Positions 21, 45, 73, and 88 each coordinate Zn(2+). Asn-107 carries an N-linked (GlcNAc...) asparagine glycan.

The protein belongs to the Ole e I family. Post-translationally, exists in two variants: glycosylated and non-glycosylated. Carries a complex, major N-linked glycan, with a alpha-1,3-fucose residue in its structure and probably also a beta-1,2-xylose. The average modification of molecular mass due to glycosylation is approximately 969 Da.

It localises to the secreted. The sequence is that of Major pollen allergen Pla l 1 from Plantago lanceolata (English plantain).